A 218-amino-acid polypeptide reads, in one-letter code: GTP cyclohydrolase 1 (218 aa).

Residues C109, H112, and C180 each contribute to the Zn(2+) site.

Belongs to the GTP cyclohydrolase I family. As to quaternary structure, toroid-shaped homodecamer, composed of two pentamers of five dimers.

It carries out the reaction GTP + H2O = 7,8-dihydroneopterin 3'-triphosphate + formate + H(+). It participates in cofactor biosynthesis; 7,8-dihydroneopterin triphosphate biosynthesis; 7,8-dihydroneopterin triphosphate from GTP: step 1/1. The chain is GTP cyclohydrolase 1 from Histophilus somni (strain 129Pt) (Haemophilus somnus).